The sequence spans 255 residues: Hydroxyacylglutathione hydrolase (255 aa).

The Zn(2+) site is built by His-56, His-58, Asp-60, His-61, His-114, Asp-133, and His-171.

The protein belongs to the metallo-beta-lactamase superfamily. Glyoxalase II family. Monomer. The cofactor is Zn(2+).

The enzyme catalyses an S-(2-hydroxyacyl)glutathione + H2O = a 2-hydroxy carboxylate + glutathione + H(+). Its pathway is secondary metabolite metabolism; methylglyoxal degradation; (R)-lactate from methylglyoxal: step 2/2. Thiolesterase that catalyzes the hydrolysis of S-D-lactoyl-glutathione to form glutathione and D-lactic acid. This is Hydroxyacylglutathione hydrolase from Nitrobacter winogradskyi (strain ATCC 25391 / DSM 10237 / CIP 104748 / NCIMB 11846 / Nb-255).